The chain runs to 394 residues: Phosphopentomutase (394 aa).

Residues D14, D287, H292, D328, H329, and H340 each contribute to the Mn(2+) site.

Belongs to the phosphopentomutase family. It depends on Mn(2+) as a cofactor.

Its subcellular location is the cytoplasm. It carries out the reaction 2-deoxy-alpha-D-ribose 1-phosphate = 2-deoxy-D-ribose 5-phosphate. The catalysed reaction is alpha-D-ribose 1-phosphate = D-ribose 5-phosphate. It participates in carbohydrate degradation; 2-deoxy-D-ribose 1-phosphate degradation; D-glyceraldehyde 3-phosphate and acetaldehyde from 2-deoxy-alpha-D-ribose 1-phosphate: step 1/2. Functionally, isomerase that catalyzes the conversion of deoxy-ribose 1-phosphate (dRib-1-P) and ribose 1-phosphate (Rib-1-P) to deoxy-ribose 5-phosphate (dRib-5-P) and ribose 5-phosphate (Rib-5-P), respectively. The polypeptide is Phosphopentomutase (Listeria innocua serovar 6a (strain ATCC BAA-680 / CLIP 11262)).